Reading from the N-terminus, the 372-residue chain is Queuine tRNA-ribosyltransferase (372 aa).

Asp-92 serves as the catalytic Proton acceptor. Substrate is bound by residues 92-96 (DSGGY), Asp-146, Gln-188, and Gly-215. The interval 246 to 252 (GIGSLRE) is RNA binding. Residue Asp-265 is the Nucleophile of the active site. The tract at residues 270 to 274 (TRLGR) is RNA binding; important for wobble base 34 recognition. Residues Cys-303, Cys-305, Cys-308, and His-334 each contribute to the Zn(2+) site.

The protein belongs to the queuine tRNA-ribosyltransferase family. As to quaternary structure, homodimer. Within each dimer, one monomer is responsible for RNA recognition and catalysis, while the other monomer binds to the replacement base PreQ1. Zn(2+) is required as a cofactor.

The enzyme catalyses 7-aminomethyl-7-carbaguanine + guanosine(34) in tRNA = 7-aminomethyl-7-carbaguanosine(34) in tRNA + guanine. The protein operates within tRNA modification; tRNA-queuosine biosynthesis. In terms of biological role, catalyzes the base-exchange of a guanine (G) residue with the queuine precursor 7-aminomethyl-7-deazaguanine (PreQ1) at position 34 (anticodon wobble position) in tRNAs with GU(N) anticodons (tRNA-Asp, -Asn, -His and -Tyr). Catalysis occurs through a double-displacement mechanism. The nucleophile active site attacks the C1' of nucleotide 34 to detach the guanine base from the RNA, forming a covalent enzyme-RNA intermediate. The proton acceptor active site deprotonates the incoming PreQ1, allowing a nucleophilic attack on the C1' of the ribose to form the product. After dissociation, two additional enzymatic reactions on the tRNA convert PreQ1 to queuine (Q), resulting in the hypermodified nucleoside queuosine (7-(((4,5-cis-dihydroxy-2-cyclopenten-1-yl)amino)methyl)-7-deazaguanosine). This Prochlorococcus marinus (strain MIT 9211) protein is Queuine tRNA-ribosyltransferase.